A 284-amino-acid chain; its full sequence is MSMNSSTEISQEPSIMKPVSSISSFVFNAGFLQGTFSDTTLIIKGETYHLHALFLGRSPVLLQKLIENNPKGDVHYTIEVETEDPYVTKESCLFVLSTLYCDSPRIPAEVNVCSVLAVSDLLGLDTLAFEASSLIEKSIRPETMESVIRFLDPNFEGLERLKMGMYPRFTSGLFNKAIQVMYNTLVSNWNTEYARLLCNLPFEVIKDLLESDKLTVGASSMARYKLANEIVKMRASFRKQNHIEGKGDESVVLAFDEGSRGIQLVHIAPGAESRRKIWKATSVR.

The BTB domain maps to 37-108; sequence SDTTLIIKGE…LYCDSPRIPA (72 aa).

In terms of assembly, interacts with cul3.

The protein localises to the cytoplasm. The protein resides in the nucleus. The protein operates within protein modification; protein ubiquitination. Probable substrate-specific adapter of an E3 ubiquitin-protein ligase complex which mediates the ubiquitination and subsequent proteasomal degradation of target proteins. The sequence is that of BTB/POZ domain-containing protein 2 (btb2) from Schizosaccharomyces pombe (strain 972 / ATCC 24843) (Fission yeast).